We begin with the raw amino-acid sequence, 406 residues long: MNGFAVIPSVTTTTTSGEPIASDVARKQNLLELDREGLERFFEDVLGEKRYRAHQVMKWIHHRYVADFEQMTDVGKALRTRLQACAEVRVPRVVFDKHSADGTHKWLLAMGTDRKNAIETVYIPDKGRGTLCVSSQIGCGLNCTFCSTATQGFNRNLTTAEIIGQVWVAARHLGNVPHQRRRLTNVVMMGMGEPLMNFDNVVRAMSVMRDDLGYGLSNKRVTLSTSGLVPMIDRLSTESDVSLAVSLHAPNDKLREQLVPLNKKYPIVELMASCERYLSVNRKRDSVTFEYTLMKGVNDKQEHAHELAKLMRQFDCAMQVKGAAKVNLIPFNPFPGTCYERSTEVDIRAFQKILLDAQILAMVRRTRGDDIDAACGQLKGQVVDRTRRQAEFRRTIEDRVGRDVAA.

Glu119 acts as the Proton acceptor in catalysis. A Radical SAM core domain is found at 125 to 370 (DKGRGTLCVS…AMVRRTRGDD (246 aa)). An intrachain disulfide couples Cys132 to Cys375. The [4Fe-4S] cluster site is built by Cys139, Cys143, and Cys146. Residues 192–193 (GE), Ser224, 246–248 (SLH), and Asn332 each bind S-adenosyl-L-methionine. Cys375 (S-methylcysteine intermediate) is an active-site residue.

The protein belongs to the radical SAM superfamily. RlmN family. [4Fe-4S] cluster serves as cofactor.

It is found in the cytoplasm. The catalysed reaction is adenosine(2503) in 23S rRNA + 2 reduced [2Fe-2S]-[ferredoxin] + 2 S-adenosyl-L-methionine = 2-methyladenosine(2503) in 23S rRNA + 5'-deoxyadenosine + L-methionine + 2 oxidized [2Fe-2S]-[ferredoxin] + S-adenosyl-L-homocysteine. It carries out the reaction adenosine(37) in tRNA + 2 reduced [2Fe-2S]-[ferredoxin] + 2 S-adenosyl-L-methionine = 2-methyladenosine(37) in tRNA + 5'-deoxyadenosine + L-methionine + 2 oxidized [2Fe-2S]-[ferredoxin] + S-adenosyl-L-homocysteine. Its function is as follows. Specifically methylates position 2 of adenine 2503 in 23S rRNA and position 2 of adenine 37 in tRNAs. m2A2503 modification seems to play a crucial role in the proofreading step occurring at the peptidyl transferase center and thus would serve to optimize ribosomal fidelity. The polypeptide is Dual-specificity RNA methyltransferase RlmN (Xylella fastidiosa (strain M12)).